The sequence spans 299 residues: Elongation factor Ts (299 aa).

Positions 82-85 (TDFV) are involved in Mg(2+) ion dislocation from EF-Tu.

The protein belongs to the EF-Ts family.

The protein resides in the cytoplasm. Its function is as follows. Associates with the EF-Tu.GDP complex and induces the exchange of GDP to GTP. It remains bound to the aminoacyl-tRNA.EF-Tu.GTP complex up to the GTP hydrolysis stage on the ribosome. This Dechloromonas aromatica (strain RCB) protein is Elongation factor Ts.